Here is a 183-residue protein sequence, read N- to C-terminus: 3-hydroxydecanoyl-[acyl-carrier-protein] dehydratase (183 aa).

His77 is an active-site residue.

It belongs to the thioester dehydratase family. FabA subfamily. As to quaternary structure, homodimer.

It localises to the cytoplasm. The enzyme catalyses a (3R)-hydroxyacyl-[ACP] = a (2E)-enoyl-[ACP] + H2O. It carries out the reaction (3R)-hydroxydecanoyl-[ACP] = (2E)-decenoyl-[ACP] + H2O. The catalysed reaction is (2E)-decenoyl-[ACP] = (3Z)-decenoyl-[ACP]. It participates in lipid metabolism; fatty acid biosynthesis. Its function is as follows. Necessary for the introduction of cis unsaturation into fatty acids. Catalyzes the dehydration of (3R)-3-hydroxydecanoyl-ACP to E-(2)-decenoyl-ACP and then its isomerization to Z-(3)-decenoyl-ACP. Can catalyze the dehydratase reaction for beta-hydroxyacyl-ACPs with saturated chain lengths up to 16:0, being most active on intermediate chain length. This chain is 3-hydroxydecanoyl-[acyl-carrier-protein] dehydratase, found in Hahella chejuensis (strain KCTC 2396).